A 946-amino-acid chain; its full sequence is Protein translocase subunit SecA (946 aa).

ATP contacts are provided by residues Gln-89, 107-111 (GEGKT), and Asp-508. Residues 534–569 (PEDSHKPPVPLQRRKDSSVGFGKEENNSKDKKVNHS) form a disordered region. Residues 546 to 569 (RRKDSSVGFGKEENNSKDKKVNHS) show a composition bias toward basic and acidic residues.

The protein belongs to the SecA family. As to quaternary structure, monomer and homodimer. Part of the essential Sec protein translocation apparatus which comprises SecA, SecYEG and auxiliary proteins SecDF. Other proteins may also be involved.

It localises to the cell inner membrane. It is found in the cellular thylakoid membrane. The protein localises to the cytoplasm. It catalyses the reaction ATP + H2O + cellular proteinSide 1 = ADP + phosphate + cellular proteinSide 2.. Part of the Sec protein translocase complex. Interacts with the SecYEG preprotein conducting channel. Has a central role in coupling the hydrolysis of ATP to the transfer of proteins into and across the cell membrane, serving as an ATP-driven molecular motor driving the stepwise translocation of polypeptide chains across the membrane. In terms of biological role, probably participates in protein translocation into and across both the cytoplasmic and thylakoid membranes in cyanobacterial cells. In Prochlorococcus marinus (strain SARG / CCMP1375 / SS120), this protein is Protein translocase subunit SecA.